Consider the following 549-residue polypeptide: Membrane protein insertase YidC (549 aa).

A helical membrane pass occupies residues Val8 to Ser28. Over residues Pro29–Pro39 the composition is skewed to pro residues. The disordered stretch occupies residues Pro29–Asp68. Composition is skewed to low complexity over residues Glu40–Ala49 and Gln55–Asp68. A run of 4 helical transmembrane segments spans residues Ile328–Met348, Leu354–Tyr374, Leu424–Leu444, and Pro502–Val522.

The protein belongs to the OXA1/ALB3/YidC family. Type 1 subfamily. In terms of assembly, interacts with the Sec translocase complex via SecD. Specifically interacts with transmembrane segments of nascent integral membrane proteins during membrane integration.

It localises to the cell inner membrane. Required for the insertion and/or proper folding and/or complex formation of integral membrane proteins into the membrane. Involved in integration of membrane proteins that insert both dependently and independently of the Sec translocase complex, as well as at least some lipoproteins. Aids folding of multispanning membrane proteins. This chain is Membrane protein insertase YidC, found in Anaeromyxobacter sp. (strain Fw109-5).